The primary structure comprises 243 residues: Killer cell lectin-like receptor subfamily I member 1 (243 aa).

Over 1–80 the chain is Cytoplasmic; sequence MPHSKHRDYT…RQGPKSAVWR (80 aa). 2 short sequence motifs (ITIM motif) span residues 16–21 and 47–52; these read IPYTEL and LKYAEL. Residues 81–101 form a helical; Signal-anchor for type II membrane protein membrane-spanning segment; the sequence is VVTCVLGVLCVVLMITMGILV. The Extracellular segment spans residues 102–243; that stretch reads PKLFSGQEEQ…KPYACEFNKM (142 aa). N-linked (GlcNAc...) asparagine glycosylation is found at Asn-123, Asn-191, Asn-194, Asn-200, and Asn-214. The C-type lectin domain occupies 137 to 239; the sequence is FGNNFYLFFR…CSSKKPYACE (103 aa). Cystine bridges form between Cys-158–Cys-238 and Cys-217–Cys-230.

As to quaternary structure, heterodimer with KLRE1. Interacts with PTPN6. In terms of tissue distribution, expressed in natural killer (NK) cells.

It is found in the cell membrane. Functionally, lectin-like receptor for natural killer (NK) cells. Heterodimer formation with KLRE1 mediates inhibition of NK cell cytolytic activity. This is Killer cell lectin-like receptor subfamily I member 1 from Rattus norvegicus (Rat).